Consider the following 479-residue polypeptide: Glutamyl-tRNA reductase (479 aa).

Substrate is bound by residues 49-52 (TCNR), S109, 114-116 (EQQ), and Q120. Residue C50 is the Nucleophile of the active site. 191-196 (GAGSMG) provides a ligand contact to NADP(+).

Belongs to the glutamyl-tRNA reductase family. Homodimer.

The enzyme catalyses (S)-4-amino-5-oxopentanoate + tRNA(Glu) + NADP(+) = L-glutamyl-tRNA(Glu) + NADPH + H(+). It functions in the pathway porphyrin-containing compound metabolism; protoporphyrin-IX biosynthesis; 5-aminolevulinate from L-glutamyl-tRNA(Glu): step 1/2. Functionally, catalyzes the NADPH-dependent reduction of glutamyl-tRNA(Glu) to glutamate 1-semialdehyde (GSA). In Rhodococcus jostii (strain RHA1), this protein is Glutamyl-tRNA reductase.